The sequence spans 242 residues: Tryptophan synthase alpha chain (242 aa).

Residues E31 and D42 each act as proton acceptor in the active site.

The protein belongs to the TrpA family. In terms of assembly, tetramer of two alpha and two beta chains.

It catalyses the reaction (1S,2R)-1-C-(indol-3-yl)glycerol 3-phosphate + L-serine = D-glyceraldehyde 3-phosphate + L-tryptophan + H2O. The protein operates within amino-acid biosynthesis; L-tryptophan biosynthesis; L-tryptophan from chorismate: step 5/5. Functionally, the alpha subunit is responsible for the aldol cleavage of indoleglycerol phosphate to indole and glyceraldehyde 3-phosphate. This chain is Tryptophan synthase alpha chain, found in Staphylococcus aureus (strain MRSA252).